Reading from the N-terminus, the 246-residue chain is MTMDKSELVQKAKLAEQAERYDDMAAAMKAVTEQGHELSNEERNLLSVAYKNVVGARRSSWRVISSIEQKTERNEKKQQMGKEYREKIEAELQDICNDVLELLDKYLIPNATQPESKVFYLKMKGDYFRYLSEVASGDNKQTTVSNSQQAYQEAFEISKKEMQPTHPIRLGLALNFSVFYYEILNSPEKACSLAKTAFDEAIAELDTLNEESYKDSTLIMQLLRDNLTLWTSENQGDEGDAGEGEN.

The residue at position 1 (methionine 1) is an N-acetylmethionine; in 14-3-3 protein beta/alpha; alternate. N-acetylmethionine is present on methionine 1. Position 2 is an N-acetylthreonine; in 14-3-3 protein beta/alpha, N-terminally processed (threonine 2). The residue at position 2 (threonine 2) is a Phosphothreonine. Position 5 is an N6-acetyllysine (lysine 5). Lysine 51 bears the N6-acetyllysine; alternate mark. Lysine 51 participates in a covalent cross-link: Glycyl lysine isopeptide (Lys-Gly) (interchain with G-Cter in SUMO2); alternate. A Phosphoserine modification is found at serine 60. Lysine 70 is modified (N6-acetyllysine). 3'-nitrotyrosine is present on residues tyrosine 84 and tyrosine 106. Position 117 is an N6-acetyllysine (lysine 117). Phosphoserine occurs at positions 186 and 232.

The protein belongs to the 14-3-3 family. In terms of assembly, homodimer. Interacts with SAMSN1 and PRKCE. Interacts with AKAP13. Interacts with SSH1 and TORC2/CRTC2. Interacts with ABL1; the interaction results in cytoplasmic location of ABL1 and inhibition of cABL-mediated apoptosis. Interacts with ROR2 (dimer); the interaction results in phosphorylation of YWHAB on tyrosine residues. Interacts with GAB2. Interacts with YAP1 (phosphorylated form). Interacts with the phosphorylated (by AKT1) form of SRPK2. Interacts with PKA-phosphorylated AANAT. Interacts with MYO1C. Interacts with SIRT2. Interacts with the 'Thr-369' phosphorylated form of DAPK2. Interacts with PI4KB, TBC1D22A and TBC1D22B. Interacts with the 'Ser-1134' and 'Ser-1161' phosphorylated form of SOS1. Interacts (via phosphorylated form) with YWHAB; this interaction occurs in a protein kinase AKT1-dependent manner. Interacts with SLITRK1. Interacts with SYNPO2 (phosphorylated form); YWHAB competes with ACTN2 for interaction with SYNPO2. Interacts with RIPOR2 (via phosphorylated form) isoform 2; this interaction occurs in a chemokine-dependent manner and does not compete for binding of RIPOR2 with RHOA nor blocks inhibition of RIPOR2-mediated RHOA activity. Interacts with MARK2 and MARK3. Interacts with TESK1; the interaction is dependent on the phosphorylation of TESK1 'Ser-437' and inhibits TESK1 kinase activity. Interacts with MEFV. Interacts with HDAC4. Interacts with ADAM22 (via C-terminus). (Microbial infection) Interacts with herpes simplex virus 1 protein UL46. As to quaternary structure, (Microbial infection) Probably interacts with Chlamydia trachomatis protein IncG. In terms of processing, the alpha, brain-specific form differs from the beta form in being phosphorylated. Phosphorylated on Ser-60 by protein kinase C delta type catalytic subunit in a sphingosine-dependent fashion.

Its subcellular location is the cytoplasm. The protein resides in the melanosome. The protein localises to the vacuole membrane. In terms of biological role, adapter protein implicated in the regulation of a large spectrum of both general and specialized signaling pathways. Binds to a large number of partners, usually by recognition of a phosphoserine or phosphothreonine motif. Binding generally results in the modulation of the activity of the binding partner. Negative regulator of osteogenesis. Blocks the nuclear translocation of the phosphorylated form (by AKT1) of SRPK2 and antagonizes its stimulatory effect on cyclin D1 expression resulting in blockage of neuronal apoptosis elicited by SRPK2. Negative regulator of signaling cascades that mediate activation of MAP kinases via AKAP13. In Homo sapiens (Human), this protein is 14-3-3 protein beta/alpha (YWHAB).